Reading from the N-terminus, the 277-residue chain is Alternative cytochrome c oxidase subunit 2 (277 aa).

Over 1–40 the chain is Periplasmic; sequence MAVALILLLIAIGSVLFHLFSPWWWTPIATNWGYIDDTIN. The helical transmembrane segment at 41–61 threads the bilayer; sequence ITFWITGFVFTAVILFMAYCV. Over 62–83 the chain is Cytoplasmic; the sequence is FRFHHKEGRQAAYNPENKKLEW. Residues 84 to 104 form a helical membrane-spanning segment; the sequence is WLSVGTGVGVAAMLAPGLVVW. Over 105–277 the chain is Periplasmic; that stretch reads HQFVTVPADA…VRAKYNSGDD (173 aa). Cu cation-binding residues include His-190, Cys-225, Cys-229, and His-233.

The protein belongs to the cytochrome c oxidase subunit 2 family.

It is found in the cell membrane. The enzyme catalyses 4 Fe(II)-[cytochrome c] + O2 + 8 H(+)(in) = 4 Fe(III)-[cytochrome c] + 2 H2O + 4 H(+)(out). Cytochrome c oxidase is the component of the respiratory chain that catalyzes the reduction of oxygen to water. Subunits 1-3 form the functional core of the enzyme complex. Subunit 2 transfers the electrons from cytochrome c via its binuclear copper A center to the bimetallic center of the catalytic subunit 1. The polypeptide is Alternative cytochrome c oxidase subunit 2 (coxM) (Bradyrhizobium diazoefficiens (strain JCM 10833 / BCRC 13528 / IAM 13628 / NBRC 14792 / USDA 110)).